The primary structure comprises 115 residues: MARVKRGVIARARHKKVLKQAKGYYGARSRVYRVAKQAVIKAGQYAYRDRRQRKRQFRALWITRINAGAREFGLSYSRFISGLKKASIEIDRKVLADLAVRDKDAFAELARIAQG.

It belongs to the bacterial ribosomal protein bL20 family.

Binds directly to 23S ribosomal RNA and is necessary for the in vitro assembly process of the 50S ribosomal subunit. It is not involved in the protein synthesizing functions of that subunit. The chain is Large ribosomal subunit protein bL20 from Methylococcus capsulatus (strain ATCC 33009 / NCIMB 11132 / Bath).